Here is a 552-residue protein sequence, read N- to C-terminus: MSQVYVNEKTGADSTDVSGSEQQPFQTPAFALFKNEDAKILVYKQLEDSEEFGYGEISASALKKAKKGAEGLKKKQEKQAKLQEEQRKHQDDAAKKFAEMDLISIKEDESLPQAKKIKLRTVQDNIGTRVVVQGWIHRLRLQKGLGFITLRDGTGFIQCILTGDLAKCKTTHELTLESTVTIKGVINKLPEGKSAPGGVELKVDYYEVVGLAPSGEEAFSNKVQENADPSLLLDQRHLALRGESLSAVMKVRSTLLQAIRRFFAEEGLLEVTPPCMVQTQVEGGSTLFKMDYYGEEAYLTQSSQLYLETCLPALGDVFCVQESFRAEKSHTRRHLSEYTHIESELGFIEFDDLLTHLERLITYVVKYVVEDPVAGPLIKQLNPNFVPPQMPFKRMEYIHALDWLNEHGIPNEDGEKFKFGDDIAEAAERKMTDTIGVPILLIRFPVEIKSFYMQKCADDPRVTESVDVLMPTVGEITGGSMRTYDNDELVAAIKREGLDLDSYYWFTDQRKYGTCPHGGYGLGTERILAWLCDRFTVRDCSLYPRFTGRCKP.

The interval 1-23 is disordered; the sequence is MSQVYVNEKTGADSTDVSGSEQQ. Residues 12-23 are compositionally biased toward polar residues; sequence ADSTDVSGSEQQ.

The protein belongs to the class-II aminoacyl-tRNA synthetase family.

Its subcellular location is the cytoplasm. It catalyses the reaction tRNA(Asn) + L-asparagine + ATP = L-asparaginyl-tRNA(Asn) + AMP + diphosphate + H(+). The polypeptide is Asparagine--tRNA ligase, cytoplasmic (DED81) (Debaryomyces hansenii (strain ATCC 36239 / CBS 767 / BCRC 21394 / JCM 1990 / NBRC 0083 / IGC 2968) (Yeast)).